A 617-amino-acid chain; its full sequence is Chaperone protein HscA homolog (617 aa).

The protein belongs to the heat shock protein 70 family.

Chaperone involved in the maturation of iron-sulfur cluster-containing proteins. Has a low intrinsic ATPase activity which is markedly stimulated by HscB. The protein is Chaperone protein HscA homolog of Aliivibrio salmonicida (strain LFI1238) (Vibrio salmonicida (strain LFI1238)).